Reading from the N-terminus, the 375-residue chain is Alcohol dehydrogenase 1B (375 aa).

An N-acetylserine modification is found at S1. Zn(2+)-binding residues include C46, H67, C97, C100, C103, C111, and C174. Residues 199–204 (GLGGVG), D223, K228, 293–295 (VGV), and R370 each bind NAD(+).

The protein belongs to the zinc-containing alcohol dehydrogenase family. Class-I subfamily. In terms of assembly, multimeric (with different ratios of monomers). The cofactor is Zn(2+).

It is found in the cytoplasm. The enzyme catalyses a primary alcohol + NAD(+) = an aldehyde + NADH + H(+). It catalyses the reaction a secondary alcohol + NAD(+) = a ketone + NADH + H(+). This is Alcohol dehydrogenase 1B from Saara hardwickii (Indian spiny-tailed lizard).